The sequence spans 113 residues: Protein NATD1 (113 aa).

In terms of domain architecture, N-acetyltransferase spans 22–112 (EHDRRRRQFT…PLPQYLERLQ (91 aa)).

This sequence belongs to the NATD1 family.

The protein is Protein NATD1 (NATD1) of Homo sapiens (Human).